The sequence spans 435 residues: Trigger factor (435 aa).

Residues 163–248 (GDTVTIDFDG…IHEIKTKELP (86 aa)) form the PPIase FKBP-type domain.

It belongs to the FKBP-type PPIase family. Tig subfamily.

It is found in the cytoplasm. It catalyses the reaction [protein]-peptidylproline (omega=180) = [protein]-peptidylproline (omega=0). Its function is as follows. Involved in protein export. Acts as a chaperone by maintaining the newly synthesized protein in an open conformation. Functions as a peptidyl-prolyl cis-trans isomerase. This is Trigger factor from Pediococcus pentosaceus (strain ATCC 25745 / CCUG 21536 / LMG 10740 / 183-1w).